Consider the following 410-residue polypeptide: NIPA-like protein 3 (410 aa).

The interval 1 to 24 (MDGAHSAGLQLQPLPPTSGATSTS) is disordered. 9 helical membrane-spanning segments follow: residues 37 to 57 (NLIG…ALNL), 80 to 100 (WWLG…SYAF), 105 to 125 (LIVP…IIFI), 139 to 159 (VLSF…VTFA), 175 to 195 (LVSW…CLLL), 206 to 226 (IVVI…TVKA), 244 to 264 (PIFY…ATFL), 275 to 295 (LIAS…GAIF), and 304 to 324 (ALHI…VFLI). Ser376 is subject to Phosphoserine. The segment at 389-410 (EEHSSRSTPGVPYRVLEHTKKE) is disordered.

This sequence belongs to the NIPA family.

It is found in the membrane. The protein is NIPA-like protein 3 (Nipal3) of Mus musculus (Mouse).